A 515-amino-acid polypeptide reads, in one-letter code: Probable cytosol aminopeptidase (515 aa).

Mn(2+) contacts are provided by Lys274 and Asp279. Residue Lys286 is part of the active site. Asp297, Asp356, and Glu358 together coordinate Mn(2+). The active site involves Arg360.

The protein belongs to the peptidase M17 family. Requires Mn(2+) as cofactor.

Its subcellular location is the cytoplasm. It catalyses the reaction Release of an N-terminal amino acid, Xaa-|-Yaa-, in which Xaa is preferably Leu, but may be other amino acids including Pro although not Arg or Lys, and Yaa may be Pro. Amino acid amides and methyl esters are also readily hydrolyzed, but rates on arylamides are exceedingly low.. The catalysed reaction is Release of an N-terminal amino acid, preferentially leucine, but not glutamic or aspartic acids.. Functionally, presumably involved in the processing and regular turnover of intracellular proteins. Catalyzes the removal of unsubstituted N-terminal amino acids from various peptides. This chain is Probable cytosol aminopeptidase, found in Desulforapulum autotrophicum (strain ATCC 43914 / DSM 3382 / VKM B-1955 / HRM2) (Desulfobacterium autotrophicum).